Consider the following 762-residue polypeptide: ATP-dependent RNA helicase SUV3 homolog, mitochondrial (762 aa).

Residues methionine 1 to alanine 36 constitute a mitochondrion transit peptide. In terms of domain architecture, Helicase ATP-binding spans asparagine 181–glutamate 321. Position 194–201 (glycine 194–threonine 201) interacts with ATP. Residues arginine 331–alanine 508 enclose the Helicase C-terminal domain. Residues glutamate 716–lysine 762 form a disordered region. Residues glutamine 721 to threonine 730 show a composition bias toward polar residues. A compositionally biased stretch (acidic residues) spans proline 739–serine 748.

The protein belongs to the helicase family. Mg(2+) serves as cofactor. Requires Mn(2+) as cofactor.

It localises to the mitochondrion. The enzyme catalyses ATP + H2O = ADP + phosphate + H(+). Major helicase player in mitochondrial RNA metabolism and maintenance. Likely component of the mitochondrial degradosome (mtEXO) complex, that degrades 3' overhang double-stranded RNA with a 3'-to-5' directionality in an ATP-dependent manner. ATPase and ATP-dependent multisubstrate helicase, able to unwind double-stranded (ds) DNA and RNA, and RNA/DNA heteroduplexes in the 5'-to-3' direction. Regulates mRNA stability and is required for the correct processing and maturation of mitochondrial transcripts. The sequence is that of ATP-dependent RNA helicase SUV3 homolog, mitochondrial from Drosophila pseudoobscura pseudoobscura (Fruit fly).